The following is a 37-amino-acid chain: VFINVKCTGSKQCLPACKAAVGKAAGKCMNGKCKCYT.

3 disulfide bridges follow: cysteine 7/cysteine 28, cysteine 13/cysteine 33, and cysteine 17/cysteine 35. An interaction with Ca(2+)-activated K(+) channels region spans residues 26–33 (GKCMNGKC).

Expressed by the venom gland.

Its subcellular location is the secreted. Its function is as follows. Blocks reversibly Shaker B potassium-channels. This Tityus discrepans (Venezuelan scorpion) protein is Potassium channel toxin alpha-KTx 4.3.